A 321-amino-acid polypeptide reads, in one-letter code: tRNA(Ile)-lysidine synthase (321 aa).

Residue 21–26 (SYGSDS) participates in ATP binding.

Belongs to the tRNA(Ile)-lysidine synthase family.

The protein localises to the cytoplasm. It catalyses the reaction cytidine(34) in tRNA(Ile2) + L-lysine + ATP = lysidine(34) in tRNA(Ile2) + AMP + diphosphate + H(+). Its function is as follows. Ligates lysine onto the cytidine present at position 34 of the AUA codon-specific tRNA(Ile) that contains the anticodon CAU, in an ATP-dependent manner. Cytidine is converted to lysidine, thus changing the amino acid specificity of the tRNA from methionine to isoleucine. The protein is tRNA(Ile)-lysidine synthase of Campylobacter jejuni subsp. jejuni serotype O:2 (strain ATCC 700819 / NCTC 11168).